Consider the following 869-residue polypeptide: MEEASSSTGSAGGAGPSVPNLPSTSEAAIGQTNLEPESIALLQSQLQEYRQKQMDLIGHFQRAQQELSVQHMHNLYAALQQQQQLQNLQTERSAVNPLLISQQHSTEDQNSGPAAPLSLANSLTNLLSSSNGNLSVPQTPTKEHHPTAPTSNRKCDLPRSNSTTISQLTKDRLKNMIANRSKGESNSQSNLMSNSVTANGNGHDNGRKLKNSNSQVNVSSPHFEPYRLPTSLANAHNLQQASEFQLRKVNSEPNLKMRIRAKLLSKGSSPVQHVQQNNSQFNFTHPQLKRSDSETSQNVPLDFMQSSSQTNLPHLMLPSPSLPNLAAAGAFHGLNLPVGQDLNAFMAVANLSPFLSLPSLLNKKLELGGLTDEGDRNGLIGSSSTSSLASNVSMGSHQYQSLLKQQIRDLVLRRKSLVREDPEGEGLAELYNGLLPQAKLQQLQALAAESGFLAKQEPTCTTGLGYDQAMVRHECCCGNNASHVENGGRIQSIWSKLIEHGHVQKCEKVTAKKASLEQLQLVHSQTYTTFFAVSPTACLKIDANSLPLKRFLQLPCGGIGVDSDTYFNDASTQTAARLAAGTLIELSSQVAEGRLKNGFACIRPPGHHAEHEQAMGFCFFNNVAVAVKVLQTKYPAQCAKIAIIDWDVHHGNGTQLSFENDPNVLYMSLHRHDKGNFFPGTGSVTEVGKNDAKGLTVNVPFSGDVMRDPEYLAAWRTVIEPVMASFCPDFIIVSAGFDACHGHPNALGGYEVTPEMFGYMTKSLLNYASGKVVLALEGGYDLKSISEAAQQCVQALIGESDDAGRLSSVALESLPNPSAVETLQKVIAIHKSYWPALHGQEAAINTTEMQWRNLKLQVQMQQQQQQQQT.

3 disordered regions span residues 1–25 (MEEA…PSTS), 128–167 (SSSN…TISQ), and 180–218 (RSKG…QVNV). Polar residues predominate over residues 184-202 (ESNSQSNLMSNSVTANGNG). Serine 251 carries the phosphoserine modification. Residues 460-802 (CTTGLGYDQA…VQALIGESDD (343 aa)) form a histone deacetylase region. Histidine 608 is a catalytic residue.

This sequence belongs to the histone deacetylase family. HD type 2 subfamily. As to quaternary structure, interacts with mef-2. Phosphorylated by serine/threonine-protein kinase kin-29 at Ser-251; the phosphorylation inhibits repression of transcription by mef-2. May be phosphorylated by either cyclic-AMP dependent or cyclic-GMP dependent protein kinases. As to expression, expressed in body-wall muscle cells, hypodermal seam cells and neuronal cells including sensory amphid neuronal processes, the nerve ring, ventral nerve cords and motor neuronal commissures.

It is found in the nucleus. The catalysed reaction is N(6)-acetyl-L-lysyl-[histone] + H2O = L-lysyl-[histone] + acetate. Functionally, responsible for the deacetylation of lysine residues on the N-terminal part of the core histones (H2A, H2B, H3 and H4). Histone deacetylation gives a tag for epigenetic repression and plays an important role in transcriptional regulation, cell cycle progression and developmental events. Histone deacetylases act via the formation of large multiprotein complexes. Involved in transduction of sensory signals, together with egl-4, kin-29 and mef-2; binding to transcription factor mef-2 enables negative modulation of chemoreceptor gene expression in chemosensory neurons. May be involved in muscle development. The sequence is that of Histone deacetylase 4 (hda-4) from Caenorhabditis elegans.